A 127-amino-acid polypeptide reads, in one-letter code: Large ribosomal subunit protein bL17 (127 aa).

It belongs to the bacterial ribosomal protein bL17 family. In terms of assembly, part of the 50S ribosomal subunit. Contacts protein L32.

The chain is Large ribosomal subunit protein bL17 from Lactobacillus gasseri (strain ATCC 33323 / DSM 20243 / BCRC 14619 / CIP 102991 / JCM 1131 / KCTC 3163 / NCIMB 11718 / NCTC 13722 / AM63).